The primary structure comprises 469 residues: 3-isopropylmalate dehydratase large subunit (469 aa).

[4Fe-4S] cluster contacts are provided by cysteine 347, cysteine 410, and cysteine 413.

It belongs to the aconitase/IPM isomerase family. LeuC type 1 subfamily. In terms of assembly, heterodimer of LeuC and LeuD. [4Fe-4S] cluster serves as cofactor.

It carries out the reaction (2R,3S)-3-isopropylmalate = (2S)-2-isopropylmalate. It participates in amino-acid biosynthesis; L-leucine biosynthesis; L-leucine from 3-methyl-2-oxobutanoate: step 2/4. In terms of biological role, catalyzes the isomerization between 2-isopropylmalate and 3-isopropylmalate, via the formation of 2-isopropylmaleate. In Ralstonia nicotianae (strain ATCC BAA-1114 / GMI1000) (Ralstonia solanacearum), this protein is 3-isopropylmalate dehydratase large subunit.